A 1304-amino-acid chain; its full sequence is TPR-containing protein DDB_G0280363 (1304 aa).

Disordered regions lie at residues 19–85, 153–195, 296–334, 447–477, 576–687, and 706–728; these read QQHH…HPQQ, NINN…NSSL, LPSTNSSIVSRQQQLQQQQQKLKLKSSPSPISPFFYTQQ, GFNWSPSLQPDQSTSTNHTQAMLQQQQQRQQ, QNQQ…VTTI, and LTTVNHSKPPPNESKRGELVESP. Composition is skewed to low complexity over residues 25 to 44, 52 to 85, and 153 to 194; these read QQNNTQVQQQQQQHTTQFNQ, HQQHQQQQHHQQQHHQQQQQQQQQQQQQQQHPQQ, and NINN…NNSS. A compositionally biased stretch (polar residues) spans 296–306; sequence LPSTNSSIVSR. Over residues 307 to 316 the composition is skewed to low complexity; that stretch reads QQQLQQQQQK. The segment covering 448–465 has biased composition (polar residues); that stretch reads FNWSPSLQPDQSTSTNHT. 2 stretches are compositionally biased toward low complexity: residues 466–477 and 576–597; these read QAMLQQQQQRQQ and QNQQQNQQQNQQQNQQHYPNQH. Residues 598–625 are compositionally biased toward basic residues; sequence HGQHQHNQHNQHHNQHHNQSHPNHKNQH. Residues 626-687 show a composition bias toward low complexity; the sequence is QKQNQTQQST…NNNTNNVTTI (62 aa). TPR repeat units lie at residues 769–802, 899–932, 978–1011, 1046–1079, 1084–1111, 1112–1150, and 1152–1184; these read WRVYLELADLANRQNNLKLARKFYRKVTSTQPYI, MKHVPWYGPIYQEAYKLEERCEEYERAINIVEKG, WKIYFEAAQIEERSKNLTLSRAAYVKSVELCPEN, SKLRSLVLLEYSRLEEYAGNINKSRRILKMAHVE, WKVFLESVLLEMRANNYEAAIKEAKESL, KIHSGAGRLWAALIQLNQLKGVKSQLNVFKKALQFVPKS, and EVWCEGARIALNNNELREARRFLEFAIQFTPQF.

The polypeptide is TPR-containing protein DDB_G0280363 (Dictyostelium discoideum (Social amoeba)).